Consider the following 831-residue polypeptide: Heat shock 70 kDa protein 15 (831 aa).

Disordered stretches follow at residues 502 to 579 (EEEV…KKKV) and 784 to 831 (IMTK…EGST). The span at 512-526 (DQSEETAKMDTDKAS) shows a compositional bias: basic and acidic residues. Phosphoserine is present on residues Ser-533 and Ser-536. Low complexity predominate over residues 787-800 (KPKPAAKAEAPQAK).

Belongs to the heat shock protein 70 (TC 1.A.33) family. HSP110/SSE subfamily.

Its subcellular location is the cytoplasm. The protein resides in the nucleus. In terms of biological role, in cooperation with other chaperones, Hsp70s are key components that facilitate folding of de novo synthesized proteins, assist translocation of precursor proteins into organelles, and are responsible for degradation of damaged protein under stress conditions. This Arabidopsis thaliana (Mouse-ear cress) protein is Heat shock 70 kDa protein 15 (HSP70-15).